We begin with the raw amino-acid sequence, 121 residues long: Succinate dehydrogenase assembly factor 3, mitochondrial (121 aa).

Residues 1–35 (MRPSLVRLVRPRRPERKTSPILPPLKLYKALLRAH) constitute a mitochondrion transit peptide.

This sequence belongs to the complex I LYR family. SDHAF3 subfamily. As to quaternary structure, interacts with the iron-sulfur protein subunit within the SDH catalytic dimer.

The protein resides in the mitochondrion matrix. Its function is as follows. Plays an essential role in the assembly of succinate dehydrogenase (SDH), an enzyme complex (also referred to as respiratory complex II) that is a component of both the tricarboxylic acid (TCA) cycle and the mitochondrial electron transport chain, and which couples the oxidation of succinate to fumarate with the reduction of ubiquinone (coenzyme Q) to ubiquinol. Promotes maturation of the iron-sulfur protein subunit of the SDH catalytic dimer, protecting it from the deleterious effects of oxidants. May act together with SDHAF1. This Debaryomyces hansenii (strain ATCC 36239 / CBS 767 / BCRC 21394 / JCM 1990 / NBRC 0083 / IGC 2968) (Yeast) protein is Succinate dehydrogenase assembly factor 3, mitochondrial.